A 235-amino-acid polypeptide reads, in one-letter code: Vacuolar protein sorting-associated protein 60.1 (235 aa).

Residues 1–29 (MRRVFGAKKNTEPPPSIQDASDRINKRGD) are disordered. Positions 20–29 (ASDRINKRGD) are enriched in basic and acidic residues. Positions 99–148 (LKDAQQTMTALKSANKELKGMMKTVKIQDIDNLQDEMMDLMDVSSEIQES) form a coiled coil. Residues 175–235 (MGNETEADGM…PAVPRASLRG (61 aa)) are disordered.

This sequence belongs to the SNF7 family. As to quaternary structure, interacts with SKD1/VPS4 and LIP5. Interacts with VPS2.2.

It is found in the endosome. Its subcellular location is the multivesicular body membrane. In terms of biological role, probable peripherally associated component of the endosomal sorting required for transport complex III (ESCRT-III) which is involved in multivesicular bodies (MVBs) formation and sorting of endosomal cargo proteins into MVBs. This Arabidopsis thaliana (Mouse-ear cress) protein is Vacuolar protein sorting-associated protein 60.1.